The following is a 159-amino-acid chain: Small ribosomal subunit protein uS17x (159 aa).

It belongs to the universal ribosomal protein uS17 family.

It localises to the cytoplasm. The sequence is that of Small ribosomal subunit protein uS17x (RPS11C) from Arabidopsis thaliana (Mouse-ear cress).